A 499-amino-acid chain; its full sequence is Phenylalanine--tRNA ligase alpha subunit B (499 aa).

Residues T330, 373–375 (QIE), and Y413 contribute to the L-phenylalanine site. E415 provides a ligand contact to Mg(2+). Residue F439 participates in L-phenylalanine binding.

This sequence belongs to the class-II aminoacyl-tRNA synthetase family. Phe-tRNA synthetase alpha subunit type 2 subfamily. As to quaternary structure, heterotetramer; dimer of two heterodimers formed by alpha and beta subunits. Mg(2+) is required as a cofactor.

The protein resides in the cytoplasm. It carries out the reaction tRNA(Phe) + L-phenylalanine + ATP = L-phenylalanyl-tRNA(Phe) + AMP + diphosphate + H(+). This chain is Phenylalanine--tRNA ligase alpha subunit B (farsa-b), found in Xenopus laevis (African clawed frog).